The primary structure comprises 110 residues: Ferredoxin (110 aa).

2 4Fe-4S ferredoxin-type domains span residues 2–30 (TYIV…YEGE) and 31–60 (FMLV…PESP). Residues Cys9 and Cys17 each coordinate [3Fe-4S] cluster. 4 residues coordinate [4Fe-4S] cluster: Cys21, Cys40, Cys43, and Cys46. Position 50 (Cys50) interacts with [3Fe-4S] cluster.

Requires [4Fe-4S] cluster as cofactor. The cofactor is [3Fe-4S] cluster.

Its function is as follows. Ferredoxins are iron-sulfur proteins that transfer electrons in a wide variety of metabolic reactions. This is Ferredoxin (fdxA) from Rickettsia typhi (strain ATCC VR-144 / Wilmington).